A 238-amino-acid polypeptide reads, in one-letter code: Immunoglobulin superfamily member 6 (238 aa).

The N-terminal stretch at 1-27 is a signal peptide; it reads MGPVSTSRRGLRLGISLILLQVGVVGA. Topologically, residues 28 to 153 are extracellular; that stretch reads CTVSVLQPGY…RLFSREVHSL (126 aa). Positions 30–134 constitute an Ig-like C2-type domain; that stretch reads VSVLQPGYLE…EPVPTAKQTG (105 aa). Residues C51 and C118 are joined by a disulfide bond. The chain crosses the membrane as a helical span at residues 154–174; it reads LIVLLALLAVYVTGVCVIFIV. The Cytoplasmic portion of the chain corresponds to 175-238; the sequence is LFRSKSNTPR…RKALPSPGRP (64 aa). Residues 215–230 show a composition bias toward basic and acidic residues; sequence ETSHQPEQDGNYENRK. Residues 215–238 are disordered; sequence ETSHQPEQDGNYENRKALPSPGRP.

It is found in the membrane. This Rattus norvegicus (Rat) protein is Immunoglobulin superfamily member 6 (Igsf6).